The chain runs to 257 residues: Thiazole synthase (257 aa).

The active-site Schiff-base intermediate with DXP is K100. Residues G161, 187–188, and 209–210 each bind 1-deoxy-D-xylulose 5-phosphate; these read AG and NT.

The protein belongs to the ThiG family. As to quaternary structure, homotetramer. Forms heterodimers with either ThiH or ThiS.

The protein resides in the cytoplasm. The catalysed reaction is [ThiS sulfur-carrier protein]-C-terminal-Gly-aminoethanethioate + 2-iminoacetate + 1-deoxy-D-xylulose 5-phosphate = [ThiS sulfur-carrier protein]-C-terminal Gly-Gly + 2-[(2R,5Z)-2-carboxy-4-methylthiazol-5(2H)-ylidene]ethyl phosphate + 2 H2O + H(+). It participates in cofactor biosynthesis; thiamine diphosphate biosynthesis. Functionally, catalyzes the rearrangement of 1-deoxy-D-xylulose 5-phosphate (DXP) to produce the thiazole phosphate moiety of thiamine. Sulfur is provided by the thiocarboxylate moiety of the carrier protein ThiS. In vitro, sulfur can be provided by H(2)S. The protein is Thiazole synthase of Pelagibacter ubique (strain HTCC1062).